Reading from the N-terminus, the 31-residue chain is Mycofactocin precursor peptide (31 aa).

This sequence belongs to the mycofactocin precursor peptide family. The post-translational modifications that lead to mycofactocin involve oxidative decarboxylation of the C-terminal tyrosine residue catalyzed by MftC, introduction of a tyramine-valine cross-link, removal of the modified C-terminal dipeptide by MftE. The released dipeptide then undergoes oxidative deamination by MftD, glycosylation by MftF and methylation by an unknown enzyme.

Precursor peptide that leads to mycofactocin (MFT) after extensive post-translational modifications by enzymes encoded by adjacent genes. Mycofactocin acts as a redox cofactor of nicotinamide-dependent oxidoreductases encoded in the same locus. Is required for the in vivo ethanol assimilation in M.smegmatis. The polypeptide is Mycofactocin precursor peptide (Mycolicibacterium smegmatis (strain ATCC 700084 / mc(2)155) (Mycobacterium smegmatis)).